Reading from the N-terminus, the 98-residue chain is Large ribosomal subunit protein eL21 (98 aa).

Residues 1–24 (MVKKAHSFRRKTRGKLSKHPRRRG) are compositionally biased toward basic residues. Residues 1 to 27 (MVKKAHSFRRKTRGKLSKHPRRRGLPP) form a disordered region.

The protein belongs to the eukaryotic ribosomal protein eL21 family. As to quaternary structure, part of the 50S ribosomal subunit.

In Thermococcus kodakarensis (strain ATCC BAA-918 / JCM 12380 / KOD1) (Pyrococcus kodakaraensis (strain KOD1)), this protein is Large ribosomal subunit protein eL21.